A 91-amino-acid polypeptide reads, in one-letter code: uncharacterized protein (91 aa).

This is an uncharacterized protein from Kluyveromyces lactis (strain ATCC 8585 / CBS 2359 / DSM 70799 / NBRC 1267 / NRRL Y-1140 / WM37) (Yeast).